Consider the following 390-residue polypeptide: Oxygen-dependent coproporphyrinogen-III oxidase (390 aa).

The tract at residues 131-140 (VLQDGDVFEK) is important for dimerization. A substrate-binding site is contributed by serine 181. Catalysis depends on histidine 195, which acts as the Proton donor. Residues 197–199 (NYR) and 348–353 (GARYES) contribute to the substrate site. Residues 329–365 (YVEFNLIYDRGTKFGLYTPGARYESILMSLPLHARWE) form an important for dimerization region.

The protein belongs to the aerobic coproporphyrinogen-III oxidase family. Homodimer.

It carries out the reaction coproporphyrinogen III + O2 + 2 H(+) = protoporphyrinogen IX + 2 CO2 + 2 H2O. Its pathway is porphyrin-containing compound metabolism; protoporphyrin-IX biosynthesis; protoporphyrinogen-IX from coproporphyrinogen-III (O2 route): step 1/1. Involved in the heme biosynthesis. Catalyzes the aerobic oxidative decarboxylation of propionate groups of rings A and B of coproporphyrinogen-III to yield the vinyl groups in protoporphyrinogen-IX. This chain is Oxygen-dependent coproporphyrinogen-III oxidase (Coprox), found in Drosophila melanogaster (Fruit fly).